Here is a 189-residue protein sequence, read N- to C-terminus: Recombination protein RecR (189 aa).

Residues 48–63 (CQTCFHLSAEPTCEIC) form a C4-type zinc finger. The 95-residue stretch at 71 to 165 (GMLCVVADSR…EVSRIAYGLP (95 aa)) folds into the Toprim domain.

This sequence belongs to the RecR family.

Functionally, may play a role in DNA repair. It seems to be involved in an RecBC-independent recombinational process of DNA repair. It may act with RecF and RecO. This Synechococcus sp. (strain CC9311) protein is Recombination protein RecR.